We begin with the raw amino-acid sequence, 141 residues long: Hemoglobin subunit beta-C (141 aa).

Residues proline 1 to histidine 141 form the Globin domain. Heme b contacts are provided by histidine 58 and histidine 87.

The protein belongs to the globin family. As to quaternary structure, heterotetramer of two alpha chains and two beta chains. Red blood cells.

Functionally, involved in oxygen transport from the lung to the various peripheral tissues. In Ovis aries musimon (Mouflon), this protein is Hemoglobin subunit beta-C (HBBC).